An 815-amino-acid chain; its full sequence is Probable AMP deaminase (815 aa).

The chain crosses the membrane as a helical span at residues 5–27 (YALHLAVATLLGASFAAASAYYM). Disordered regions lie at residues 53-116 (LLDA…PVPT) and 144-173 (LLTNGTIGSDPLPGKASQNGDTKPVPSTNM). The span at 105-116 (VRPTTPRSPVPT) shows a compositional bias: low complexity. Residues 159–173 (ASQNGDTKPVPSTNM) are compositionally biased toward polar residues. Residues His-367 and His-369 each contribute to the Zn(2+) site. Substrate-binding positions include His-369 and 438-443 (KFNLKY). Zn(2+) is bound at residue His-635. Substrate is bound at residue Glu-638. His-657 acts as the Proton acceptor in catalysis. Asp-712 contacts Zn(2+). 713–716 (DPLQ) serves as a coordination point for substrate.

Belongs to the metallo-dependent hydrolases superfamily. Adenosine and AMP deaminases family. Homodimer. It depends on Zn(2+) as a cofactor.

Its subcellular location is the membrane. The catalysed reaction is AMP + H2O + H(+) = IMP + NH4(+). It participates in purine metabolism; IMP biosynthesis via salvage pathway; IMP from AMP: step 1/1. Its function is as follows. AMP deaminase plays a critical role in energy metabolism. In Oryza sativa subsp. japonica (Rice), this protein is Probable AMP deaminase (AMPD).